The primary structure comprises 47 residues: Bifunctional chitinase/lysozyme (47 aa).

The region spanning 1-47 (GGIAIYWGQNGNEGTLTQTCNTGKYSYVNIAFLNKFGNGQTPEINLA) is the GH18 domain.

Belongs to the glycosyl hydrolase 18 family. Chitinase class II subfamily.

The protein localises to the secreted. It localises to the extracellular space. The enzyme catalyses Random endo-hydrolysis of N-acetyl-beta-D-glucosaminide (1-&gt;4)-beta-linkages in chitin and chitodextrins.. The catalysed reaction is Hydrolysis of (1-&gt;4)-beta-linkages between N-acetylmuramic acid and N-acetyl-D-glucosamine residues in a peptidoglycan and between N-acetyl-D-glucosamine residues in chitodextrins.. In terms of biological role, bifunctional enzyme with lysozyme/chitinase activity. This is Bifunctional chitinase/lysozyme from Parthenocissus quinquefolia (Virginia creeper).